The chain runs to 266 residues: Syntaxin-71 (266 aa).

Over methionine 1–asparagine 243 the chain is Cytoplasmic. At serine 12 the chain carries Phosphoserine. A coiled-coil region spans residues glutamate 44–leucine 87. Residues aspartate 122–lysine 146 form a disordered region. Residues serine 130 to serine 141 show a composition bias toward low complexity. One can recognise a t-SNARE coiled-coil homology domain in the interval glutamate 172–threonine 234. A helical; Anchor for type IV membrane protein membrane pass occupies residues phenylalanine 244–valine 264. Topologically, residues leucine 265 to lysine 266 are vesicular.

The protein belongs to the syntaxin family. As to quaternary structure, part of the t-SNARE complex. As to expression, expressed in root, leaf, stem, flower and silique.

It is found in the membrane. Functionally, vesicle trafficking protein that functions in the secretory pathway. The chain is Syntaxin-71 (SYP71) from Arabidopsis thaliana (Mouse-ear cress).